The primary structure comprises 289 residues: Light-independent protochlorophyllide reductase iron-sulfur ATP-binding protein (289 aa).

Residues 10 to 15 and lysine 39 contribute to the ATP site; that span reads GIGKST. Serine 14 provides a ligand contact to Mg(2+). Cysteine 95 and cysteine 129 together coordinate [4Fe-4S] cluster. Position 180–181 (180–181) interacts with ATP; the sequence is NR.

This sequence belongs to the NifH/BchL/ChlL family. As to quaternary structure, homodimer. Protochlorophyllide reductase is composed of three subunits; ChlL, ChlN and ChlB. [4Fe-4S] cluster serves as cofactor.

The protein resides in the plastid. It is found in the chloroplast. It catalyses the reaction chlorophyllide a + oxidized 2[4Fe-4S]-[ferredoxin] + 2 ADP + 2 phosphate = protochlorophyllide a + reduced 2[4Fe-4S]-[ferredoxin] + 2 ATP + 2 H2O. Its pathway is porphyrin-containing compound metabolism; chlorophyll biosynthesis (light-independent). Functionally, component of the dark-operative protochlorophyllide reductase (DPOR) that uses Mg-ATP and reduced ferredoxin to reduce ring D of protochlorophyllide (Pchlide) to form chlorophyllide a (Chlide). This reaction is light-independent. The L component serves as a unique electron donor to the NB-component of the complex, and binds Mg-ATP. The protein is Light-independent protochlorophyllide reductase iron-sulfur ATP-binding protein of Tetradesmus obliquus (Green alga).